The primary structure comprises 511 residues: Aminotransferase FGSG_17085 (511 aa).

165-166 contributes to the pyridoxal 5'-phosphate binding site; it reads GA. Tyr-200 is a substrate binding site. Asp-310 is a binding site for pyridoxal 5'-phosphate. Position 339 is an N6-(pyridoxal phosphate)lysine (Lys-339). Position 371 (Gly-371) interacts with substrate. Residue 372 to 373 participates in pyridoxal 5'-phosphate binding; that stretch reads HT.

It belongs to the class-III pyridoxal-phosphate-dependent aminotransferase family. Pyridoxal 5'-phosphate serves as cofactor.

It functions in the pathway secondary metabolite biosynthesis. Its function is as follows. Aminotransferase; part of the gene cluster that mediates the biosynthesis of the lipopeptide fusaristatin A. Fusaristatin A consists of a polyketide chain linked to three amino acid residues glutamine (Gln), dehydroalanine (dehydro-Ala), and beta-aminoisobutyric acid. The biosynthesis starts with formation of a linear polyketide chain by the highly reducing polyketide synthase PKS6. The gene cluster does not contain an acyl-CoA ligase or an acyl-transferase, and it is therefore predicted that the polyketide is transferred directly to the nonribosomal peptide synthetase NRPS7. Modules 1-3 from NRPS7 incorporate dehydro-Ala, Gln, and beta-aminoisobutyric acid in the compound, which is released by cyclization. The beta-aminoisobutyric acid units are most likely not freely available to the NRPS, but can be synthesized from thymine, which requires a dehydrogenase, a monooxygenase, and an aminotransferase. The fusaristatin A cluster contains a cytochrome P450 monooxygenase (FGSG_08207) and an aminotransferase (FGSG_17085), which theoretically can perform two of the enzymatic steps. The enzymes may however also be involved in biosynthesis of dehydroalanine or modification of the polyketide. The dehydro-Ala residue can be a result of cyclization, where serine is dehydrated. The last gene of the cluster encodes a protein with an A/B barrel domain found in variable enzymes, which hampers functional prediction. In Gibberella zeae (strain ATCC MYA-4620 / CBS 123657 / FGSC 9075 / NRRL 31084 / PH-1) (Wheat head blight fungus), this protein is Aminotransferase FGSG_17085.